We begin with the raw amino-acid sequence, 171 residues long: MNRKQKRLAVIAGGMGFIAAAVLLVMFAFSQSVAYFYMPADLAKTPVAPETRIRLGGLVGEGSVVRGAGSTVEFSVTDGSANAVKVKYTGILPDLFREGQGVVTEGMFAPGTNVFTADTVLAKHDETYMPKDVADRLKQQGLWKEGQGGQESPGKEGQGQENPGEEAKATQ.

Over 1 to 7 (MNRKQKR) the chain is Cytoplasmic. Residues 8–28 (LAVIAGGMGFIAAAVLLVMFA) traverse the membrane as a helical; Signal-anchor for type II membrane protein segment. The Periplasmic segment spans residues 29-171 (FSQSVAYFYM…NPGEEAKATQ (143 aa)). Heme is bound by residues histidine 124 and tyrosine 128. Positions 132-171 (DVADRLKQQGLWKEGQGGQESPGKEGQGQENPGEEAKATQ) are disordered.

It belongs to the CcmE/CycJ family.

The protein localises to the cell inner membrane. Functionally, heme chaperone required for the biogenesis of c-type cytochromes. Transiently binds heme delivered by CcmC and transfers the heme to apo-cytochromes in a process facilitated by CcmF and CcmH. The protein is Cytochrome c-type biogenesis protein CcmE of Rhizobium leguminosarum bv. trifolii (strain WSM2304).